The following is a 332-amino-acid chain: Endo-1,4-beta-xylanase (332 aa).

Residues 1–21 form the signal peptide; sequence MLSSTTLLAILSALALTSVQA. One can recognise a GH10 domain in the interval 26-316; the sequence is KNSLDYLANK…KSTYYVVQQA (291 aa). Residue E120 is the Proton donor of the active site. A disulfide bridge links C128 with C160. The active-site Nucleophile is E214. C247 and C253 are joined by a disulfide.

This sequence belongs to the glycosyl hydrolase 10 (cellulase F) family.

The protein localises to the secreted. It catalyses the reaction Endohydrolysis of (1-&gt;4)-beta-D-xylosidic linkages in xylans.. In terms of biological role, requires at least three xylose residues for catalytic activity. Does not have activity against xylobiose. The chain is Endo-1,4-beta-xylanase from Naganishia albida (Cryptococcus albidus).